A 523-amino-acid polypeptide reads, in one-letter code: Heparanase (523 aa).

A signal peptide spans 1–18 (MLVLLLLVLLLAVPPRRT). Residues 42 to 44 (DAS), threonine 77, and 137 to 141 (KKHKN) contribute to the heparan sulfate group site. 2 N-linked (GlcNAc...) asparagine glycosylation sites follow: asparagine 141 and asparagine 196. Glutamate 204 acts as the Proton donor in catalysis. Heparan sulfate group contacts are provided by residues 250–260 (QPRKHTQHLLR), histidine 276, and arginine 283. Residues 268–397 (KAIDSVTWHH…LLYKRLVGTR (130 aa)) are required for heterodimerization with the heparanase 8 kDa subunit. Residue glutamate 323 is the Nucleophile of the active site. Heparan sulfate group-binding positions include 328–330 (YGG) and 369–371 (GSY). Cysteine 417 and cysteine 522 are disulfide-bonded. Asparagine 436 and asparagine 439 each carry an N-linked (GlcNAc...) asparagine glycan. The interval 507–523 (FSYGFYVIRNAKAIACI) is required for transferring proheparanase to the Golgi apparatus, secretion and subsequent enzyme activity and for enhancement of PKB/AKT1 phosphorylation.

Belongs to the glycosyl hydrolase 79 family. As to quaternary structure, heterodimer; the active enzyme is a heterodimer of the 60 kDa and 45 kDa proteolytic products. In terms of processing, N-glycosylated. Proteolytically cleaved to produce a 60 kDa and a 45 kDa product.

It localises to the secreted. The enzyme catalyses endohydrolysis of (1-&gt;4)-beta-D-glycosidic bonds of heparan sulfate chains in heparan sulfate proteoglycan.. Functionally, endoglycosidase that cleaves heparan sulfate proteoglycans (HSPGs) into heparan sulfate side chains and core proteoglycans. Participates in extracellular matrix (ECM) degradation and remodeling. Selectively cleaves the linkage between a glucuronic acid unit and an N-sulfo glucosamine unit carrying either a 3-O-sulfo or a 6-O-sulfo group. Can also cleave the linkage between a glucuronic acid unit and an N-sulfo glucosamine unit carrying a 2-O-sulfo group, but not linkages between a glucuronic acid unit and a 2-O-sulfated iduronic acid moiety. Increases cell adhesion to the extracellular matrix (ECM), independent of its enzymatic activity. The polypeptide is Heparanase (HPSE) (Gallus gallus (Chicken)).